The chain runs to 419 residues: Putative competence-damage inducible protein (419 aa).

Belongs to the CinA family.

The protein is Putative competence-damage inducible protein of Streptococcus agalactiae serotype Ia (strain ATCC 27591 / A909 / CDC SS700).